A 766-amino-acid chain; its full sequence is Phosphoribosylformylglycinamidine synthase subunit PurL (766 aa).

Residue His-46 is part of the active site. ATP contacts are provided by Tyr-49 and Lys-88. A Mg(2+)-binding site is contributed by Glu-90. Substrate-binding positions include 91–94 (SHNH) and Arg-113. His-92 serves as the catalytic Proton acceptor. Asp-114 is a binding site for Mg(2+). Gln-237 is a binding site for substrate. Position 265 (Asp-265) interacts with Mg(2+). 309–311 (ESQ) contributes to the substrate binding site. 2 residues coordinate ATP: Asp-520 and Gly-557. Asn-558 is a Mg(2+) binding site. Substrate is bound at residue Ser-560.

Belongs to the FGAMS family. As to quaternary structure, monomer. Part of the FGAM synthase complex composed of 1 PurL, 1 PurQ and 2 PurS subunits.

Its subcellular location is the cytoplasm. It carries out the reaction N(2)-formyl-N(1)-(5-phospho-beta-D-ribosyl)glycinamide + L-glutamine + ATP + H2O = 2-formamido-N(1)-(5-O-phospho-beta-D-ribosyl)acetamidine + L-glutamate + ADP + phosphate + H(+). Its pathway is purine metabolism; IMP biosynthesis via de novo pathway; 5-amino-1-(5-phospho-D-ribosyl)imidazole from N(2)-formyl-N(1)-(5-phospho-D-ribosyl)glycinamide: step 1/2. Part of the phosphoribosylformylglycinamidine synthase complex involved in the purines biosynthetic pathway. Catalyzes the ATP-dependent conversion of formylglycinamide ribonucleotide (FGAR) and glutamine to yield formylglycinamidine ribonucleotide (FGAM) and glutamate. The FGAM synthase complex is composed of three subunits. PurQ produces an ammonia molecule by converting glutamine to glutamate. PurL transfers the ammonia molecule to FGAR to form FGAM in an ATP-dependent manner. PurS interacts with PurQ and PurL and is thought to assist in the transfer of the ammonia molecule from PurQ to PurL. The sequence is that of Phosphoribosylformylglycinamidine synthase subunit PurL from Synechococcus sp. (strain JA-3-3Ab) (Cyanobacteria bacterium Yellowstone A-Prime).